The following is a 184-amino-acid chain: GTP-binding protein Rheb (184 aa).

A Glycyl lysine isopeptide (Lys-Gly) (interchain with G-Cter in ubiquitin) cross-link involves residue K8. Residues S16, V17, G18, K19, S20, S21, V32, and D33 each contribute to the GDP site. GTP is bound at residue S16. Residues G18, K19, S20, S21, and V32 each contribute to the GTP site. A Mg(2+)-binding site is contributed by S20. GTP contacts are provided by Y35, T38, N119, and D122. The short motif at 35-43 is the Effector region element; sequence YDPTIENTF. Position 38 (T38) interacts with Mg(2+). GDP is bound by residues N119 and D122. Position 130 is a phosphoserine; by MAPKAPK5 (S130). A150 lines the GDP pocket. A150 contacts GTP. Position 181 is a cysteine methyl ester (C181). C181 carries the S-farnesyl cysteine lipid modification. Positions 182 to 184 are cleaved as a propeptide — removed in mature form; that stretch reads SVM.

The protein belongs to the small GTPase superfamily. Rheb family. As to quaternary structure, associates with the mTORC1 complex (MTOR, MLST8 and RPTOR) in a guanyl nucleotide-independent manner. Interacts with TSC2. Interacts with MCRS1; the interaction maintains RHEB at the lysosome in its active GTP-bound form and prevents its interaction with the mTORC1 complex inhibitor TSC2, ensuring activation of the mTORC1 complex by RHEB. Interacts (when prenylated) with PDE6D; this promotes release from membranes. In terms of processing, farnesylation is important for efficiently activating mTORC1-mediated signaling. Polyubiquitinated in response to amino acid, promoting its interaction with MTOR and mTORC1 activation. Deubiquitination by ATXN3 promotes recruitment of the TSC-TBC complex and RHEB inactivation by TSC2. Monoubiquitinated at Lys-8 by RNF152, promoting its association with the TSC-TBC complex. Deubiquitinated at Lys-8 by USP4, promoting mTORC1 activation. Post-translationally, phosphorylation by MAPKAPK5 impairs GTP-binding and inactivation. Ubiquitous. Highest levels observed in skeletal and cardiac muscle.

The protein resides in the endomembrane system. The protein localises to the lysosome membrane. Its subcellular location is the golgi apparatus membrane. It localises to the endoplasmic reticulum membrane. It is found in the cytoplasm. The protein resides in the cytosol. The catalysed reaction is GTP + H2O = GDP + phosphate + H(+). With respect to regulation, alternates between an inactive form bound to GDP and an active form bound to GTP. Inactivated by the TSC-TBC complex via the GTPase activating protein (GAP) domain of TSC2. Autoinhibited by Tyr-35, which constrains the active site conformation, restricting the access of the catalytic Asp-65 to the nucleotide-binding pocket. Specifically inhibited by NR1 (4-bromo-6-(3,4-dichlorophenylthio)-1-(4-(dimethylcarbamoyl)benzyl)-1H-indole-2-carboxylic acid). Functionally, small GTPase that acts as an allosteric activator of the canonical mTORC1 complex, an evolutionarily conserved central nutrient sensor that stimulates anabolic reactions and macromolecule biosynthesis to promote cellular biomass generation and growth. In response to nutrients, growth factors or amino acids, specifically activates the protein kinase activity of MTOR, the catalytic component of the mTORC1 complex: acts by causing a conformational change that allows the alignment of residues in the active site of MTOR, thereby enhancing the phosphorylation of ribosomal protein S6 kinase (RPS6KB1 and RPS6KB2) and EIF4EBP1 (4E-BP1). RHEB is also required for localization of the TSC-TBC complex to lysosomal membranes. In response to starvation, RHEB is inactivated by the TSC-TBC complex, preventing activation of mTORC1. Has low intrinsic GTPase activity. This Homo sapiens (Human) protein is GTP-binding protein Rheb.